The following is a 426-amino-acid chain: Adenylosuccinate synthetase (426 aa).

Residues 18–24 (GDEGKGK) and 46–48 (GHT) contribute to the GTP site. Aspartate 19 acts as the Proton acceptor in catalysis. Mg(2+)-binding residues include aspartate 19 and glycine 46. IMP-binding positions include 19 to 22 (DEGK), 44 to 47 (NAGH), threonine 136, arginine 150, glutamine 222, threonine 237, and arginine 301. Catalysis depends on histidine 47, which acts as the Proton donor. Substrate is bound at residue 297–303 (VTTKRKR). Residues arginine 303, 329–331 (KID), and 413–415 (GTG) each bind GTP.

This sequence belongs to the adenylosuccinate synthetase family. Homodimer. It depends on Mg(2+) as a cofactor.

The protein localises to the cytoplasm. It catalyses the reaction IMP + L-aspartate + GTP = N(6)-(1,2-dicarboxyethyl)-AMP + GDP + phosphate + 2 H(+). It participates in purine metabolism; AMP biosynthesis via de novo pathway; AMP from IMP: step 1/2. Functionally, plays an important role in the de novo pathway and in the salvage pathway of purine nucleotide biosynthesis. Catalyzes the first committed step in the biosynthesis of AMP from IMP. The protein is Adenylosuccinate synthetase of Schistosoma mansoni (Blood fluke).